The sequence spans 179 residues: Acireductone dioxygenase (179 aa).

The interval 1-23 is disordered; that stretch reads MVQAWYMDESTADPRMPHRAQPD. Fe(2+)-binding residues include His-88, His-90, Glu-94, and His-133. Ni(2+) is bound by residues His-88, His-90, Glu-94, and His-133.

The protein belongs to the acireductone dioxygenase (ARD) family. Monomer. Interacts with MMP14. Requires Fe(2+) as cofactor. The cofactor is Ni(2+). In terms of tissue distribution, detected in prostate, liver, heart, brain, muscle, kidney and seminal vesicles.

Its subcellular location is the cytoplasm. The protein localises to the nucleus. It localises to the cell membrane. The enzyme catalyses 1,2-dihydroxy-5-(methylsulfanyl)pent-1-en-3-one + O2 = 4-methylsulfanyl-2-oxobutanoate + formate + 2 H(+). It catalyses the reaction 1,2-dihydroxy-5-(methylsulfanyl)pent-1-en-3-one + O2 = 3-(methylsulfanyl)propanoate + CO + formate + 2 H(+). It functions in the pathway amino-acid biosynthesis; L-methionine biosynthesis via salvage pathway; L-methionine from S-methyl-5-thio-alpha-D-ribose 1-phosphate: step 5/6. Its function is as follows. Catalyzes 2 different reactions between oxygen and the acireductone 1,2-dihydroxy-3-keto-5-methylthiopentene (DHK-MTPene) depending upon the metal bound in the active site. Fe-containing acireductone dioxygenase (Fe-ARD) produces formate and 2-keto-4-methylthiobutyrate (KMTB), the alpha-ketoacid precursor of methionine in the methionine recycle pathway. Ni-containing acireductone dioxygenase (Ni-ARD) produces methylthiopropionate, carbon monoxide and formate, and does not lie on the methionine recycle pathway. Also down-regulates cell migration mediated by MMP14. This Rattus norvegicus (Rat) protein is Acireductone dioxygenase (Adi1).